The primary structure comprises 420 residues: Probable pectate lyase C (420 aa).

The first 20 residues, 1–20, serve as a signal peptide directing secretion; that stretch reads MKLSEPLLVSLAAFSQAVTA. 3 N-linked (GlcNAc...) asparagine glycosylation sites follow: Asn49, Asn165, and Asn202. Arg205 is a catalytic residue. The region spanning 262–297 is the EF-hand domain; that stretch reads NANFHGYVQNNYYDPDKDGQLDGFELGVSSSNYGGM. Ca(2+) contacts are provided by Asp275, Asp277, Asp279, Gln281, and Glu286. A disordered region spans residues 358-396; the sequence is TMGGPGTLNGGTPAKDTDGDGIPDEAEKQLGTDPNTNDS. Asn394 carries N-linked (GlcNAc...) asparagine glycosylation.

It belongs to the polysaccharide lyase 1 family. Ca(2+) is required as a cofactor.

It is found in the secreted. The catalysed reaction is Eliminative cleavage of (1-&gt;4)-alpha-D-galacturonan to give oligosaccharides with 4-deoxy-alpha-D-galact-4-enuronosyl groups at their non-reducing ends.. Pectinolytic enzyme consist of four classes of enzymes: pectin lyase, polygalacturonase, pectin methylesterase and rhamnogalacturonase. Among pectinolytic enzymes, pectin lyase is the most important in depolymerization of pectin, since it cleaves internal glycosidic bonds of highly methylated pectins. Favors pectate, the anion, over pectin, the methyl ester. The chain is Probable pectate lyase C (plyC) from Aspergillus fumigatus (strain ATCC MYA-4609 / CBS 101355 / FGSC A1100 / Af293) (Neosartorya fumigata).